A 112-amino-acid polypeptide reads, in one-letter code: Colipase (112 aa).

The first 17 residues, 1–17, serve as a signal peptide directing secretion; that stretch reads MEKILILLLVALSVAYA. The propeptide at 18–22 is enterostatin, activation peptide; it reads APGPR. Cystine bridges form between cysteine 34/cysteine 45, cysteine 40/cysteine 56, cysteine 44/cysteine 78, cysteine 66/cysteine 86, and cysteine 80/cysteine 104.

The protein belongs to the colipase family. In terms of assembly, forms a 1:1 stoichiometric complex with pancreatic lipase. As to expression, expressed by the pancreas.

Its subcellular location is the secreted. Functionally, colipase is a cofactor of pancreatic lipase. It allows the lipase to anchor itself to the lipid-water interface. Without colipase the enzyme is washed off by bile salts, which have an inhibitory effect on the lipase. Its function is as follows. Enterostatin has a biological activity as a satiety signal. The chain is Colipase from Homo sapiens (Human).